The chain runs to 114 residues: Large ribosomal subunit protein bL21c (114 aa).

Belongs to the bacterial ribosomal protein bL21 family. In terms of assembly, part of the 50S ribosomal subunit.

It localises to the plastid. It is found in the chloroplast. Its function is as follows. This protein binds to 23S rRNA. The protein is Large ribosomal subunit protein bL21c of Staurastrum punctulatum (Green alga).